The following is a 327-amino-acid chain: Mitochondrial coenzyme A transporter SLC25A42 (327 aa).

Solcar repeat units lie at residues Lys-34–Leu-120, Leu-132–Leu-217, and Pro-227–Leu-315. 6 consecutive transmembrane segments (helical) span residues Ile-36–Pro-56, Leu-92–Cys-112, Leu-138–Val-158, Leu-189–Phe-209, Leu-233–Val-253, and Val-296–Leu-316.

The protein belongs to the mitochondrial carrier (TC 2.A.29) family.

It localises to the mitochondrion inner membrane. It carries out the reaction ADP(out) + CoA(in) = ADP(in) + CoA(out). The enzyme catalyses 3'-dephospho-CoA(in) + ADP(out) = 3'-dephospho-CoA(out) + ADP(in). The catalysed reaction is adenosine 3',5'-bisphosphate(in) + ADP(out) = adenosine 3',5'-bisphosphate(out) + ADP(in). It catalyses the reaction AMP(in) + ADP(out) = AMP(out) + ADP(in). It carries out the reaction dADP(in) + ADP(out) = dADP(out) + ADP(in). The enzyme catalyses ADP(in) + ATP(out) = ADP(out) + ATP(in). Its function is as follows. Mitochondrial carrier mediating the transport of coenzyme A (CoA) in mitochondria in exchange for intramitochondrial (deoxy)adenine nucleotides and adenosine 3',5'-diphosphate. In Xenopus tropicalis (Western clawed frog), this protein is Mitochondrial coenzyme A transporter SLC25A42 (slc25a42).